We begin with the raw amino-acid sequence, 557 residues long: Small ribosomal subunit protein bS1 (557 aa).

4 consecutive S1 motif domains span residues 21-87 (GSIV…LSRE), 105-171 (AETV…VSRR), 192-260 (GMEV…LGLK), and 277-347 (GTKL…LGLK). 3 positions are modified to N6-acetyllysine: K229, K279, and K363. 2 consecutive S1 motif domains span residues 364–434 (GDRV…LGVK) and 451–520 (GAIV…LSVR).

It belongs to the bacterial ribosomal protein bS1 family. In terms of assembly, part of the 30S ribosomal subunit. Some nascent polypeptide chains are able to cross-link to this protein in situ. Can be cross-linked to mRNA in the ribosome. Phosphorylated; probably on a serine.

Functionally, required for translation of most natural mRNAs except for leaderless mRNA. Binds mRNA upstream of the Shine-Dalgarno (SD) sequence and helps it bind to the 30S ribosomal subunit; acts as an RNA chaperone to unfold structured mRNA on the ribosome but is not essential for mRNAs with strong SDs and little 5'-UTR structure, thus it may help fine-tune which mRNAs that are translated. Unwinds dsRNA by binding to transiently formed ssRNA regions; binds about 10 nucleotides. Has a preference for polypyrimidine tracts. Negatively autoregulates its own translation. The polypeptide is Small ribosomal subunit protein bS1 (rpsA) (Escherichia coli O157:H7).